Consider the following 175-residue polypeptide: ATP-dependent protease subunit HslV (175 aa).

Residue Thr2 is part of the active site. The Na(+) site is built by Gly158, Cys161, and Thr164.

The protein belongs to the peptidase T1B family. HslV subfamily. As to quaternary structure, a double ring-shaped homohexamer of HslV is capped on each side by a ring-shaped HslU homohexamer. The assembly of the HslU/HslV complex is dependent on binding of ATP.

The protein localises to the cytoplasm. It catalyses the reaction ATP-dependent cleavage of peptide bonds with broad specificity.. Allosterically activated by HslU binding. Protease subunit of a proteasome-like degradation complex believed to be a general protein degrading machinery. The sequence is that of ATP-dependent protease subunit HslV from Histophilus somni (strain 129Pt) (Haemophilus somnus).